The sequence spans 486 residues: Cobyric acid synthase (486 aa).

A GATase cobBQ-type domain is found at 248–439 (MLRVVVPVLP…VHGLFDTPAA (192 aa)). Catalysis depends on C329, which acts as the Nucleophile. Residue H431 is part of the active site.

Belongs to the CobB/CobQ family. CobQ subfamily.

It participates in cofactor biosynthesis; adenosylcobalamin biosynthesis. Functionally, catalyzes amidations at positions B, D, E, and G on adenosylcobyrinic A,C-diamide. NH(2) groups are provided by glutamine, and one molecule of ATP is hydrogenolyzed for each amidation. This Paraburkholderia phytofirmans (strain DSM 17436 / LMG 22146 / PsJN) (Burkholderia phytofirmans) protein is Cobyric acid synthase.